A 316-amino-acid polypeptide reads, in one-letter code: Methionyl-tRNA formyltransferase (316 aa).

112 to 115 lines the (6S)-5,6,7,8-tetrahydrofolate pocket; it reads SLLP.

Belongs to the Fmt family.

It carries out the reaction L-methionyl-tRNA(fMet) + (6R)-10-formyltetrahydrofolate = N-formyl-L-methionyl-tRNA(fMet) + (6S)-5,6,7,8-tetrahydrofolate + H(+). Functionally, attaches a formyl group to the free amino group of methionyl-tRNA(fMet). The formyl group appears to play a dual role in the initiator identity of N-formylmethionyl-tRNA by promoting its recognition by IF2 and preventing the misappropriation of this tRNA by the elongation apparatus. The polypeptide is Methionyl-tRNA formyltransferase (Trichlorobacter lovleyi (strain ATCC BAA-1151 / DSM 17278 / SZ) (Geobacter lovleyi)).